The following is a 164-amino-acid chain: Protein-export protein SecB (164 aa).

The protein belongs to the SecB family. Homotetramer, a dimer of dimers. One homotetramer interacts with 1 SecA dimer.

Its subcellular location is the cytoplasm. Functionally, one of the proteins required for the normal export of preproteins out of the cell cytoplasm. It is a molecular chaperone that binds to a subset of precursor proteins, maintaining them in a translocation-competent state. It also specifically binds to its receptor SecA. This is Protein-export protein SecB from Caulobacter sp. (strain K31).